A 106-amino-acid polypeptide reads, in one-letter code: Small ribosomal subunit protein bS18 (106 aa).

The segment covering 1 to 22 (MSEETTVRPERTERSERPERPQ) has biased composition (basic and acidic residues). The interval 1–34 (MSEETTVRPERTERSERPERPQYRGNGPRKRRPF) is disordered.

Belongs to the bacterial ribosomal protein bS18 family. Part of the 30S ribosomal subunit. Forms a tight heterodimer with protein bS6.

In terms of biological role, binds as a heterodimer with protein bS6 to the central domain of the 16S rRNA, where it helps stabilize the platform of the 30S subunit. This Geobacter metallireducens (strain ATCC 53774 / DSM 7210 / GS-15) protein is Small ribosomal subunit protein bS18.